Here is a 148-residue protein sequence, read N- to C-terminus: Basic leucine zipper 4 (148 aa).

Residues 48–97 (DDKKRRRTISNRESAKRSRMKKKKRFEELTEEVNRLNIRNQELKNRLANV) form the bZIP domain. The segment at 50–70 (KKRRRTISNRESAKRSRMKKK) is disordered. The tract at residues 50–72 (KKRRRTISNRESAKRSRMKKKKR) is basic motif. The leucine-zipper stretch occupies residues 76-90 (LTEEVNRLNIRNQEL).

The protein resides in the nucleus. Functionally, probable transcription factor involved in somatic embryogenesis. Acts as a positive regulator of BHLH109. The protein is Basic leucine zipper 4 of Arabidopsis thaliana (Mouse-ear cress).